A 493-amino-acid polypeptide reads, in one-letter code: Glycerol kinase 2 (493 aa).

Position 12 (Ser12) interacts with ADP. ATP contacts are provided by Ser12 and Thr13. Ser12 contributes to the sn-glycerol 3-phosphate binding site. Residue Lys16 participates in ADP binding. Sn-glycerol 3-phosphate-binding residues include Arg82, Glu83, Tyr134, and Asp243. Glycerol contacts are provided by Arg82, Glu83, Tyr134, Asp243, and Gln244. 2 residues coordinate ADP: Thr265 and Gly308. Residues Thr265, Gly308, and Asn312 each coordinate ATP. Asn413 serves as a coordination point for ADP.

It belongs to the FGGY kinase family. Homotetramer and homodimer (in equilibrium).

The enzyme catalyses glycerol + ATP = sn-glycerol 3-phosphate + ADP + H(+). It participates in polyol metabolism; glycerol degradation via glycerol kinase pathway; sn-glycerol 3-phosphate from glycerol: step 1/1. Its activity is regulated as follows. Activated by phosphorylation and inhibited by fructose 1,6-bisphosphate (FBP). Key enzyme in the regulation of glycerol uptake and metabolism. Catalyzes the phosphorylation of glycerol to yield sn-glycerol 3-phosphate. The polypeptide is Glycerol kinase 2 (Clostridium tetani (strain Massachusetts / E88)).